A 515-amino-acid chain; its full sequence is Histidine ammonia-lyase (515 aa).

The 5-imidazolinone (Ala-Gly) cross-link spans 145–147 (ASG). Position 146 is a 2,3-didehydroalanine (Ser) (S146).

This sequence belongs to the PAL/histidase family. Contains an active site 4-methylidene-imidazol-5-one (MIO), which is formed autocatalytically by cyclization and dehydration of residues Ala-Ser-Gly.

It is found in the cytoplasm. The catalysed reaction is L-histidine = trans-urocanate + NH4(+). Its pathway is amino-acid degradation; L-histidine degradation into L-glutamate; N-formimidoyl-L-glutamate from L-histidine: step 1/3. This Gluconacetobacter diazotrophicus (strain ATCC 49037 / DSM 5601 / CCUG 37298 / CIP 103539 / LMG 7603 / PAl5) protein is Histidine ammonia-lyase.